Reading from the N-terminus, the 370-residue chain is Quinolinate synthase (370 aa).

2 residues coordinate iminosuccinate: His-62 and Ser-83. Cys-128 contacts [4Fe-4S] cluster. Residues 154–156 and Ser-171 each bind iminosuccinate; that span reads YAN. A [4Fe-4S] cluster-binding site is contributed by Cys-215. Iminosuccinate-binding positions include 241–243 and Thr-258; that span reads HPE. A [4Fe-4S] cluster-binding site is contributed by Cys-312.

This sequence belongs to the quinolinate synthase family. Type 1 subfamily. It depends on [4Fe-4S] cluster as a cofactor.

The protein localises to the cytoplasm. It catalyses the reaction iminosuccinate + dihydroxyacetone phosphate = quinolinate + phosphate + 2 H2O + H(+). The protein operates within cofactor biosynthesis; NAD(+) biosynthesis; quinolinate from iminoaspartate: step 1/1. Its function is as follows. Catalyzes the condensation of iminoaspartate with dihydroxyacetone phosphate to form quinolinate. The polypeptide is Quinolinate synthase (Neisseria meningitidis serogroup B (strain ATCC BAA-335 / MC58)).